The sequence spans 749 residues: Protein lin-54 homolog (749 aa).

A Glycyl lysine isopeptide (Lys-Gly) (interchain with G-Cter in SUMO2) cross-link involves residue Lys-139. N6-acetyllysine occurs at positions 244 and 249. Residues Ser-264, Ser-282, Ser-310, and Ser-314 each carry the phosphoserine modification. Lys-357 is covalently cross-linked (Glycyl lysine isopeptide (Lys-Gly) (interchain with G-Cter in SUMO2)). A disordered region spans residues 369–388 (ASSSTQPVSQNPSTNTQPLQ). The CRC domain occupies 521 to 634 (PRKPCNCTKS…KCIGCKNFEE (114 aa)). The tract at residues 523–536 (KPCNCTKSLCLKLY) is DNA-binding. Zn(2+) contacts are provided by Cys-525, Cys-527, Cys-532, Cys-537, Cys-539, Cys-546, Cys-549, Cys-551, and Cys-554. The linker stretch occupies residues 583–596 (IGKGKEGESDRRHS). Residues Cys-599, Cys-601, Cys-606, Cys-611, Cys-613, Cys-620, Cys-624, Cys-626, and Cys-629 each contribute to the Zn(2+) site. A DNA-binding region spans residues 599–612 (CNCKRSGCLKNYCE). Position 635 is a phosphoserine (Ser-635). Residues Lys-639, Lys-659, and Lys-661 each participate in a glycyl lysine isopeptide (Lys-Gly) (interchain with G-Cter in SUMO2) cross-link.

This sequence belongs to the lin-54 family. In terms of assembly, component of the DREAM complex (also named LINC complex) at least composed of E2F4, E2F5, LIN9, LIN37, LIN52, LIN54, MYBL1, MYBL2, RBL1, RBL2, RBBP4, TFDP1 and TFDP2. The complex exists in quiescent cells where it represses cell cycle-dependent genes. It dissociates in S phase when LIN9, LIN37, LIN52 and LIN54 form a subcomplex that binds to MYBL2.

It localises to the nucleus. Its function is as follows. Component of the DREAM complex, a multiprotein complex that can both act as a transcription activator or repressor depending on the context. In G0 phase, the complex binds to more than 800 promoters and is required for repression of E2F target genes. In S phase, the complex selectively binds to the promoters of G2/M genes whose products are required for mitosis and participates in their cell cycle dependent activation. In the complex, acts as a DNA-binding protein that binds the promoter of CDK1 in a sequence-specific manner. Specifically recognizes the consensus motif 5'-TTYRAA-3' in target DNA. The chain is Protein lin-54 homolog (LIN54) from Homo sapiens (Human).